The following is a 473-amino-acid chain: Photosystem II CP43 reaction center protein (473 aa).

Positions 1–14 are excised as a propeptide; that stretch reads MKTLYSLRRFYPVE. N-acetylthreonine is present on T15. T15 carries the post-translational modification Phosphothreonine. The next 5 helical transmembrane spans lie at 69–93, 134–155, 178–200, 255–275, and 291–312; these read LFEVAHFVPEKPMYEQGLILLPHLA, LLGPETLEESFPFFGYVWKDRN, KALYFGGVYDTWAPGGGDVRKIT, KPFAWARRALVWSGEAYLSYS, and WFNNTAYPSEFYGPTGPEASQA. Residue E367 coordinates [CaMn4O5] cluster. Residues 447–471 form a helical membrane-spanning segment; that stretch reads RARAAAAGFEKGIDRDFEPVLSMTP.

It belongs to the PsbB/PsbC family. PsbC subfamily. In terms of assembly, PSII is composed of 1 copy each of membrane proteins PsbA, PsbB, PsbC, PsbD, PsbE, PsbF, PsbH, PsbI, PsbJ, PsbK, PsbL, PsbM, PsbT, PsbX, PsbY, PsbZ, Psb30/Ycf12, at least 3 peripheral proteins of the oxygen-evolving complex and a large number of cofactors. It forms dimeric complexes. Binds multiple chlorophylls and provides some of the ligands for the Ca-4Mn-5O cluster of the oxygen-evolving complex. It may also provide a ligand for a Cl- that is required for oxygen evolution. PSII binds additional chlorophylls, carotenoids and specific lipids. serves as cofactor.

It is found in the plastid. The protein resides in the chloroplast thylakoid membrane. Its function is as follows. One of the components of the core complex of photosystem II (PSII). It binds chlorophyll and helps catalyze the primary light-induced photochemical processes of PSII. PSII is a light-driven water:plastoquinone oxidoreductase, using light energy to abstract electrons from H(2)O, generating O(2) and a proton gradient subsequently used for ATP formation. In Vitis vinifera (Grape), this protein is Photosystem II CP43 reaction center protein.